Reading from the N-terminus, the 496-residue chain is MLSLRPYEFWFVTGSQHLYGEEALKQVEEHSMMIVNELNQDSVFPFPLVFKSVVTTPEEIRRVCLEANASEQCAGVITWMHTFSPAKMWIGGLLELRKPLLHLHTQFNRDIPWDSIDMDFMNLNQSAHGDREYGFIGARMGVARKVVVGHWEDPEVRERLAKWMRTAVAFAESRNLKVARFGDNMREVAVTEGDKVGAQIQFGWSVNGYGIGDLVQYIRDVSEQKVNELLDEYEELYDIVPAGRQEGPVRESIREQARIELGLKAFLQDGNFTAFTTTFEDLHGMKQLPGLAVQRLMAEGYGFGGEGDWKTAALVRLMKVMADGKGTSFMEDYTYHLEPGNEMILGAHMLEVCPTIAATRPRIEVHPLSIGGKEDPARLVFDGGEGAAVNASLIDLGHRFRLIVNEVDAVKPEHDMPKLPVARILWKPRPSLRDSAEAWILAGGAHHTCFSFAVTTEQLQDFAEMAGIECVVINEHTSVSSFKNELKWNEVFWRGR.

Mn(2+)-binding residues include E306, E331, H348, and H447.

It belongs to the arabinose isomerase family. In terms of assembly, homotetramer. Mn(2+) is required as a cofactor.

The catalysed reaction is beta-L-arabinopyranose = L-ribulose. Its pathway is carbohydrate degradation; L-arabinose degradation via L-ribulose; D-xylulose 5-phosphate from L-arabinose (bacterial route): step 1/3. Its activity is regulated as follows. Inhibited by copper. Functionally, catalyzes the conversion of L-arabinose to L-ribulose. In vitro, converts D-galactose into D-tagatose. This is L-arabinose isomerase (araA) from Geobacillus stearothermophilus (Bacillus stearothermophilus).